A 236-amino-acid chain; its full sequence is 2,3,4,5-tetrahydropyridine-2,6-dicarboxylate N-acetyltransferase (236 aa).

The protein belongs to the transferase hexapeptide repeat family. DapH subfamily.

It carries out the reaction (S)-2,3,4,5-tetrahydrodipicolinate + acetyl-CoA + H2O = L-2-acetamido-6-oxoheptanedioate + CoA. The protein operates within amino-acid biosynthesis; L-lysine biosynthesis via DAP pathway; LL-2,6-diaminopimelate from (S)-tetrahydrodipicolinate (acetylase route): step 1/3. Functionally, catalyzes the transfer of an acetyl group from acetyl-CoA to tetrahydrodipicolinate. The sequence is that of 2,3,4,5-tetrahydropyridine-2,6-dicarboxylate N-acetyltransferase from Limosilactobacillus reuteri (strain DSM 20016) (Lactobacillus reuteri).